Reading from the N-terminus, the 1681-residue chain is Probable UDP-glucose:glycoprotein glucosyltransferase A (1681 aa).

Positions 1 to 25 (MARIFKFFVFLLIVFISNVLLLVES) are cleaved as a signal peptide. N-linked (GlcNAc...) asparagine glycosylation is found at N81, N148, N174, and N391. A disordered region spans residues 566–586 (TKSNNNNNNNNNNNDQNSQTS). The segment covering 569 to 579 (NNNNNNNNNNN) has biased composition (low complexity). N1233 and N1338 each carry an N-linked (GlcNAc...) asparagine glycan. The segment at 1346–1657 (LFSSKNDATD…QIELDHQNQL (312 aa)) is glucosyltransferase.

Belongs to the glycosyltransferase 8 family. The cofactor is Ca(2+). Mn(2+) serves as cofactor.

The protein resides in the endoplasmic reticulum lumen. Its subcellular location is the endoplasmic reticulum-Golgi intermediate compartment. The protein operates within protein modification; protein glycosylation. Its function is as follows. Recognizes glycoproteins with minor folding defects. Reglucosylates single N-glycans near the misfolded part of the protein, thus providing quality control for protein folding in the endoplasmic reticulum. The chain is Probable UDP-glucose:glycoprotein glucosyltransferase A (ggtA) from Dictyostelium discoideum (Social amoeba).